We begin with the raw amino-acid sequence, 373 residues long: Malate dehydrogenase, mitochondrial (373 aa).

NAD(+)-binding positions include 69–75 (GAAGGIG) and aspartate 95. The substrate site is built by arginine 141 and arginine 147. NAD(+) contacts are provided by residues asparagine 154 and 177–179 (ISN). Substrate contacts are provided by asparagine 179 and arginine 213. Histidine 237 serves as the catalytic Proton acceptor. Methionine 288 contributes to the NAD(+) binding site.

This sequence belongs to the LDH/MDH superfamily. MDH type 1 family. Homodimer.

The protein localises to the mitochondrion matrix. It catalyses the reaction (S)-malate + NAD(+) = oxaloacetate + NADH + H(+). The chain is Malate dehydrogenase, mitochondrial from Chlamydomonas reinhardtii (Chlamydomonas smithii).